The chain runs to 777 residues: Histone-lysine N-methyltransferase set9 (777 aa).

The region spanning 117 to 231 (CPFEVNATNR…VGEEITVTYS (115 aa)) is the SET domain. Disordered stretches follow at residues 263 to 414 (AVQK…ILSP) and 682 to 718 (RMGS…QGQY). Polar residues predominate over residues 291-301 (TALQASRTPSV). Residues 323–337 (TSTTDSAAQGAGADG) are compositionally biased toward low complexity. Composition is skewed to polar residues over residues 371 to 405 (TAPS…QGSE) and 688 to 698 (KQGSSAPSTKG).

The protein belongs to the class V-like SAM-binding methyltransferase superfamily. Histone-lysine methyltransferase family. Suvar4-20 subfamily.

Its subcellular location is the nucleus. The protein localises to the chromosome. The catalysed reaction is L-lysyl(20)-[histone H4] + 3 S-adenosyl-L-methionine = N(6),N(6),N(6)-trimethyl-L-lysyl(20)-[histone H4] + 3 S-adenosyl-L-homocysteine + 3 H(+). Functionally, histone methyltransferase that trimethylates 'Lys-20' of histone H4 to form H4K20me3. This chain is Histone-lysine N-methyltransferase set9 (hlm-1), found in Neurospora crassa (strain ATCC 24698 / 74-OR23-1A / CBS 708.71 / DSM 1257 / FGSC 987).